The sequence spans 122 residues: Large ribosomal subunit protein uL14 (122 aa).

Belongs to the universal ribosomal protein uL14 family. In terms of assembly, part of the 50S ribosomal subunit. Forms a cluster with proteins L3 and L19. In the 70S ribosome, L14 and L19 interact and together make contacts with the 16S rRNA in bridges B5 and B8.

In terms of biological role, binds to 23S rRNA. Forms part of two intersubunit bridges in the 70S ribosome. The protein is Large ribosomal subunit protein uL14 of Staphylococcus epidermidis (strain ATCC 35984 / DSM 28319 / BCRC 17069 / CCUG 31568 / BM 3577 / RP62A).